A 713-amino-acid polypeptide reads, in one-letter code: Nucleolin (713 aa).

The segment at 1 to 309 (MVKLAKAGKT…QKIEGSEPTT (309 aa)) is disordered. 3 positions are modified to N6-acetyllysine: lysine 9, lysine 15, and lysine 16. Acidic residues predominate over residues 24–46 (VEEDSEDEEMSEDEDDSSGEEEV). A phosphoserine mark is found at serine 28, serine 34, serine 40, and serine 41. The span at 56 to 111 (ATTTPAKKVVVSQTKKAAVPTPAKKAAVTPGKKAAATPAKKAVTPAKVVPTPGKKG) shows a compositional bias: low complexity. Copy 1 of the repeat occupies 58–65 (TTPAKKVV). The segment at 58–135 (TTPAKKVVVS…GAVTPAKGAK (78 aa)) is 8 X 8 AA tandem repeats of X-T-P-X-K-K-X-X. Serine 67 bears the Phosphoserine mark. Residues threonine 69, threonine 76, threonine 84, and threonine 92 each carry the phosphothreonine modification. Repeat copies occupy residues 75 to 82 (PTPAKKAA), 83 to 90 (VTPGKKAA), and 91 to 98 (ATPAKKAV). N6-acetyllysine is present on lysine 96. Residue threonine 99 is modified to Phosphothreonine. The 5; truncated repeat unit spans residues 99 to 104 (TPAKVV). N6-acetyllysine is present on lysine 102. Residues 105 to 112 (PTPGKKGA) form repeat 6. A Phosphothreonine modification is found at threonine 106. An N6-acetyllysine mark is found at lysine 109 and lysine 116. 2 tandem repeats follow at residues 120–127 (PTPGKKGA) and 128–135 (VTPAKGAK). A Phosphothreonine modification is found at threonine 121. Lysine 124 bears the N6-acetyllysine mark. Phosphoserine is present on residues serine 145 and serine 157. Residues 145 to 168 (SDEDEDEEDEDDSDEDEDEEDEFE) show a composition bias toward acidic residues. The segment covering 169–186 (PPVVKGVKPAKAAPAAPA) has biased composition (low complexity). Phosphoserine is present on residues serine 187 and serine 213. A compositionally biased stretch (acidic residues) spans 187–218 (SEDEDEEDDDDEDDDDDDEEEEEEDDSEEEVM). At threonine 221 the chain carries Phosphothreonine. The segment covering 242–275 (EEEEDDEDDEDEEEDEDEEDEEDDEDEDEEEEEE) has biased composition (acidic residues). Residues 288 to 304 (MTKQKEAPEAKKQKIEG) show a composition bias toward basic and acidic residues. Residue lysine 301 forms a Glycyl lysine isopeptide (Lys-Gly) (interchain with G-Cter in SUMO1); alternate linkage. Lysine 301 participates in a covalent cross-link: Glycyl lysine isopeptide (Lys-Gly) (interchain with G-Cter in SUMO2); alternate. Serine 305 carries the phosphoserine modification. RRM domains are found at residues 311-387 (FNLF…KPKG) and 397-470 (RTLL…YTGE). Lysine 322 carries the post-translational modification N6-acetyllysine. A Glycyl lysine isopeptide (Lys-Gly) (interchain with G-Cter in SUMO1); alternate cross-link involves residue lysine 328. Residue lysine 328 forms a Glycyl lysine isopeptide (Lys-Gly) (interchain with G-Cter in SUMO2); alternate linkage. At lysine 352 the chain carries N6-acetyllysine. A Phosphoserine modification is found at serine 360. Phosphothreonine is present on threonine 371. Residue lysine 374 forms a Glycyl lysine isopeptide (Lys-Gly) (interchain with G-Cter in SUMO2) linkage. Residue lysine 381 forms a Glycyl lysine isopeptide (Lys-Gly) (interchain with G-Cter in SUMO2); alternate linkage. At lysine 381 the chain carries N6-acetyllysine; alternate. Residue lysine 402 is modified to N6-acetyllysine. At serine 405 the chain carries Phosphoserine. A Phosphothreonine modification is found at threonine 409. Lysine 448 carries the post-translational modification N6-acetyllysine. Residues serine 462 and serine 464 each carry the phosphoserine modification. Lysine 471 and lysine 480 each carry N6-acetyllysine. One can recognise an RRM 3 domain in the interval 489–563 (KTLVLSNLSY…RTIRLELQGP (75 aa)). Lysine 516 is covalently cross-linked (Glycyl lysine isopeptide (Lys-Gly) (interchain with G-Cter in SUMO2); alternate). Lysine 516 carries the N6-acetyllysine; alternate modification. Lysine 524 carries the post-translational modification N6-acetyllysine. Residue serine 566 is modified to Phosphoserine. N6-acetyllysine is present on lysine 575. Positions 575-650 (KTLFVKGLSE…NKVTLDWAKP (76 aa)) constitute an RRM 4 domain. Lysine 580 is covalently cross-linked (Glycyl lysine isopeptide (Lys-Gly) (interchain with G-Cter in SUMO2); alternate). N6-acetyllysine; alternate is present on lysine 580. Serine 583 carries the post-translational modification Phosphoserine. Lysine 592 is covalently cross-linked (Glycyl lysine isopeptide (Lys-Gly) (interchain with G-Cter in SUMO1); alternate). A Glycyl lysine isopeptide (Lys-Gly) (interchain with G-Cter in SUMO2); alternate cross-link involves residue lysine 592. A phosphoserine mark is found at serine 594 and serine 622. Residue lysine 627 forms a Glycyl lysine isopeptide (Lys-Gly) (interchain with G-Cter in SUMO2) linkage. The interval 645 to 713 (LDWAKPKGEG…KPQGKKTKFE (69 aa)) is disordered. Lysine 649 is modified (N6-acetyllysine). A compositionally biased stretch (gly residues) spans 653–702 (EGGFGGRGGGRGGFGGRGGGRGGRGGFGGRGRGGFGGRGGFRGGRGGGGD). 9 positions are modified to asymmetric dimethylarginine: arginine 659, arginine 663, arginine 669, arginine 673, arginine 676, arginine 682, arginine 684, arginine 690, and arginine 694. The residue at position 697 (arginine 697) is an Asymmetric dimethylarginine; alternate. An Omega-N-methylarginine; alternate modification is found at arginine 697.

As to quaternary structure, identified in a IGF2BP1-dependent mRNP granule complex containing untranslated mRNAs. Component of the SWAP complex that consists of NPM1, NCL/nucleolin, PARP1 and SWAP70. Component of a complex which is at least composed of HTATSF1/Tat-SF1, the P-TEFb complex components CDK9 and CCNT1, RNA polymerase II, SUPT5H, and NCL/nucleolin. Interacts with AICDA. Interacts with APTX. Interacts with C1QBP. Interacts with ERBB4. Interacts (via C-terminus) with FMR1 isoform 6 (via N-terminus). Interacts with GZF1; this interaction is important for nucleolar localization of GZF1. Interacts with NSUN2. Interacts with NVL. Interacts (via N-terminus domain) with SETX. Interacts (via RRM1 and C-terminal RRM4/Arg/Gly-rich domains) with TERT; the interaction is important for nucleolar localization of TERT. Interacts with WDR46. Interacts with ZFP36. Interacts with LRRC34. Interacts with RRP1B. Interacts with HNRNPU; this interaction occurs during mitosis. Interacts with RIOK1; RIOK1 recruits NCL to PRMT5 for symmetrically methylation. Interacts with ZBTB7B. Interacts with MDK; this interaction promotes NCL clustering and lateral movements of this complex into lipid rafts leading to MDK internalization. Interacts with HDGF. Interacts with ALKBH2. Interacts with IGFBP5; this interaction is necessary for IGFBP5 localization to the nucleus. Interacts with DDX24 (when ubiquitinated); this interaction may be important during ribosome biogenesis. Post-translationally, some glutamate residues are glycylated by TTLL8. This modification occurs exclusively on glutamate residues and results in a glycine chain on the gamma-carboxyl group. In terms of processing, symmetrically methylated by PRMT5.

It is found in the nucleus. The protein resides in the nucleolus. The protein localises to the cytoplasm. Nucleolin is the major nucleolar protein of growing eukaryotic cells. It is found associated with intranucleolar chromatin and pre-ribosomal particles. It induces chromatin decondensation by binding to histone H1. It is thought to play a role in pre-rRNA transcription and ribosome assembly. May play a role in the process of transcriptional elongation. Binds RNA oligonucleotides with 5'-UUAGGG-3' repeats more tightly than the telomeric single-stranded DNA 5'-TTAGGG-3' repeats. The sequence is that of Nucleolin (Ncl) from Rattus norvegicus (Rat).